The primary structure comprises 309 residues: MEIILAEPRGFCAGVKRAVDILAITLKKYRNKRKVYVLHEIVHNKYIVEDFKRQGVIFVNSIRDIKDNRGILIFSAHGVSKNIEDKAKRKGIQVIDATCPLVSKVHKEAKRYEDSGKELILIGHKNHPEVKGIRGRVNNPIVLVQTLQNVRDLKVKNPDNLSYVTQTTLSTDDTREIITALKLRFPNITGPNLKDICYATQNRQNAVKKLTEIVDIVLIIGSKNSSNSNRLLDLCTARGKRAYLIDNYSYMDKSWLQGIEKIGITAGASAPDILVDELINHLKINVNTKVSVMSDGVTENVQFKIPHLV.

Cysteine 12 provides a ligand contact to [4Fe-4S] cluster. Residues histidine 43 and histidine 77 each coordinate (2E)-4-hydroxy-3-methylbut-2-enyl diphosphate. Residues histidine 43 and histidine 77 each contribute to the dimethylallyl diphosphate site. Histidine 43 and histidine 77 together coordinate isopentenyl diphosphate. Position 99 (cysteine 99) interacts with [4Fe-4S] cluster. Position 127 (histidine 127) interacts with (2E)-4-hydroxy-3-methylbut-2-enyl diphosphate. Histidine 127 serves as a coordination point for dimethylallyl diphosphate. Histidine 127 provides a ligand contact to isopentenyl diphosphate. The Proton donor role is filled by glutamate 129. Threonine 167 contributes to the (2E)-4-hydroxy-3-methylbut-2-enyl diphosphate binding site. Cysteine 197 contacts [4Fe-4S] cluster. (2E)-4-hydroxy-3-methylbut-2-enyl diphosphate is bound by residues serine 225, serine 226, asparagine 227, and serine 269. The dimethylallyl diphosphate site is built by serine 225, serine 226, asparagine 227, and serine 269. 4 residues coordinate isopentenyl diphosphate: serine 225, serine 226, asparagine 227, and serine 269.

The protein belongs to the IspH family. Requires [4Fe-4S] cluster as cofactor.

The enzyme catalyses isopentenyl diphosphate + 2 oxidized [2Fe-2S]-[ferredoxin] + H2O = (2E)-4-hydroxy-3-methylbut-2-enyl diphosphate + 2 reduced [2Fe-2S]-[ferredoxin] + 2 H(+). The catalysed reaction is dimethylallyl diphosphate + 2 oxidized [2Fe-2S]-[ferredoxin] + H2O = (2E)-4-hydroxy-3-methylbut-2-enyl diphosphate + 2 reduced [2Fe-2S]-[ferredoxin] + 2 H(+). It participates in isoprenoid biosynthesis; dimethylallyl diphosphate biosynthesis; dimethylallyl diphosphate from (2E)-4-hydroxy-3-methylbutenyl diphosphate: step 1/1. The protein operates within isoprenoid biosynthesis; isopentenyl diphosphate biosynthesis via DXP pathway; isopentenyl diphosphate from 1-deoxy-D-xylulose 5-phosphate: step 6/6. Its function is as follows. Catalyzes the conversion of 1-hydroxy-2-methyl-2-(E)-butenyl 4-diphosphate (HMBPP) into a mixture of isopentenyl diphosphate (IPP) and dimethylallyl diphosphate (DMAPP). Acts in the terminal step of the DOXP/MEP pathway for isoprenoid precursor biosynthesis. This Wolbachia sp. subsp. Brugia malayi (strain TRS) protein is 4-hydroxy-3-methylbut-2-enyl diphosphate reductase.